The primary structure comprises 241 residues: Tetraspanin-1 (241 aa).

The Cytoplasmic segment spans residues 1–11 (MQCFSFIKTMM). Residues 12–32 (ILFNLLIFLCGAALLAVGIWV) traverse the membrane as a helical segment. The Extracellular segment spans residues 33 to 52 (SIDGASFLKIFGPLSSSAMQ). Residues 53–73 (FVNVGYFLIAAGVVVFALGFL) traverse the membrane as a helical segment. Residues 74–88 (GCYGAKTESKCALVT) lie on the Cytoplasmic side of the membrane. The chain crosses the membrane as a helical span at residues 89-109 (FFFILLLIFIAEVAAAVVALV). Over 110-211 (YTTMAEHFLT…NQLLYDIRTN (102 aa)) the chain is Extracellular. Residues N141, N154, N178, and N184 are each glycosylated (N-linked (GlcNAc...) asparagine). A helical transmembrane segment spans residues 212–232 (AVTVGGVAAGIGGLELAAMIV). At 233-241 (SMYLYCNLQ) the chain is on the cytoplasmic side.

This sequence belongs to the tetraspanin (TM4SF) family. In terms of assembly, interacts with SLC19A2. Interacts with NTRK1/TRKA.

It localises to the cell membrane. It is found in the lysosome membrane. Its function is as follows. Structural component of specialized membrane microdomains known as tetraspanin-enriched microdomains (TERMs), which act as platforms for receptor clustering and signaling. Participates thereby in diverse biological functions such as cell signal transduction, adhesion, migration and protein trafficking. Regulates neuronal differentiation in response to NGF by facilitating NGF-mediated activation of NTRK1/TRKA receptor tyrosine kinase and subsequent downstream signaling pathways. Plays a role in the inhibition of TNFalpha-induced apoptosis. Mechanistically, inhibits the NF-kappa-B signaling pathway by blocking phosphorylation of CHUK. Also promotes the stability of the thiamine transporter 1/SLC19A2 in intestinal epithelial cells leading to an increase of thiamine uptake process. This Homo sapiens (Human) protein is Tetraspanin-1 (TSPAN1).